The primary structure comprises 116 residues: Putative transmembrane protein ORF116 (116 aa).

Transmembrane regions (helical) follow at residues 20–40, 53–73, and 76–96; these read IVTL…AYAL, LLGG…TNSI, and FRGA…DVIN.

Its subcellular location is the host membrane. In Acidianus bottle-shaped virus (isolate Italy/Pozzuoli) (ABV), this protein is Putative transmembrane protein ORF116.